Here is a 314-residue protein sequence, read N- to C-terminus: Pathogenicity locus probable regulatory protein HrpR (314 aa).

The Sigma-54 factor interaction domain occupies 11 to 239; it reads TRWNVTALSA…LKSAANAICP (229 aa). Residues 39-46 and 101-110 contribute to the ATP site; these read GETGTGKD and SNGGTLYLDE. Residues 281–300 constitute a DNA-binding region (H-T-H motif); sequence FDAVLEELELPRRTLYHRMK.

Its function is as follows. Member of the two-component regulatory system HrpR/HrpS that regulates the activation of the sigma factor hrpL which itself induces the expression of hprD as well as other hrp loci which are involved in plant pathogenicity, hrmA and avr genes. Probably interacts with sigma-54. The polypeptide is Pathogenicity locus probable regulatory protein HrpR (hrpR) (Pseudomonas syringae pv. syringae).